Here is a 280-residue protein sequence, read N- to C-terminus: Thioredoxin-related transmembrane protein 1 (280 aa).

A signal peptide spans 1–26 (MAPSGSLAVPLAVLVLLLWGAPWTHG). The Thioredoxin domain occupies 27-132 (RRSNVRVITD…FINFISDKEW (106 aa)). The Extracellular segment spans residues 27–180 (RRSNVRVITD…EDLGLPVWGS (154 aa)). Residues C56 and C59 each act as nucleophile in the active site. The cysteines at positions 56 and 59 are disulfide-linked. A helical transmembrane segment spans residues 181–203 (YTVFALATLFSGLLLGLCMIFVA). The Cytoplasmic segment spans residues 204–280 (DCLCPSKRRR…LGPSLATDKS (77 aa)). S-palmitoyl cysteine attachment occurs at residues C205 and C207. The disordered stretch occupies residues 218–280 (PYPSKKLLSE…LGPSLATDKS (63 aa)). 5 positions are modified to phosphoserine: S228, S247, S270, S274, and S280. Residues 237–252 (EEQEADEEDVSEEEAE) are compositionally biased toward acidic residues.

Interacts with ATP2A2. Post-translationally, palmitoylated; palmitoylation is required for localization to mitochondria-associated endoplasmic reticulum membrane (MAM). In terms of tissue distribution, ubiquitous. Highly expressed in kidney, liver, placenta and lung.

The protein resides in the endoplasmic reticulum membrane. It is found in the mitochondrion membrane. It localises to the secreted. The enzyme catalyses Catalyzes the rearrangement of -S-S- bonds in proteins.. Functionally, thiredoxin domain-containing protein that participates in various redox reactions through the reversible oxidation of its active center dithiol to a disulfide and catalyze dithiol-disulfide exchange reactions. Acts as a key inhibitor of the alternative triglyceride biosynthesis pathway by inhibiting the activity of TMEM68/DIESL at the endoplasmic reticulum, thereby restricting accumulation of triacylglycerol. The alternative triglyceride biosynthesis pathway mediates formation of triacylglycerol from diacylglycerol and membrane phospholipids. Acts as a protein disulfide isomerase by catalyzing formation or reduction of disulfide bonds. Specifically mediates formation of disulfide bonds of transmembrane proteins at the endoplasmic reticulum membrane. Involved in endoplasmic reticulum-associated degradation (ERAD) via its protein disulfide isomerase activity by acting on folding-defective polypeptides at the endoplasmic reticulum membrane. Acts as a negative regulator of platelet aggregation following secretion in the extracellular space. Acts as a regulator of endoplasmic reticulum-mitochondria contact sites via its ability to regulate redox signals. Regulates endoplasmic reticulum-mitochondria Ca(2+) flux. In Homo sapiens (Human), this protein is Thioredoxin-related transmembrane protein 1.